The primary structure comprises 366 residues: Aminomethyltransferase (366 aa).

It belongs to the GcvT family. The glycine cleavage system is composed of four proteins: P, T, L and H.

It catalyses the reaction N(6)-[(R)-S(8)-aminomethyldihydrolipoyl]-L-lysyl-[protein] + (6S)-5,6,7,8-tetrahydrofolate = N(6)-[(R)-dihydrolipoyl]-L-lysyl-[protein] + (6R)-5,10-methylene-5,6,7,8-tetrahydrofolate + NH4(+). In terms of biological role, the glycine cleavage system catalyzes the degradation of glycine. In Bordetella parapertussis (strain 12822 / ATCC BAA-587 / NCTC 13253), this protein is Aminomethyltransferase.